A 236-amino-acid polypeptide reads, in one-letter code: Small ribosomal subunit protein uS2c (236 aa).

This sequence belongs to the universal ribosomal protein uS2 family.

The protein localises to the plastid. It is found in the chloroplast. This Oenothera biennis (German evening primrose) protein is Small ribosomal subunit protein uS2c (rps2).